Reading from the N-terminus, the 242-residue chain is Mediator of RNA polymerase II transcription subunit 19-A (242 aa).

Residues 1 to 15 (MTEIFSTLFGQNDAQ) show a composition bias toward polar residues. Disordered regions lie at residues 1 to 33 (MTEI…PPPS) and 171 to 242 (PPKK…NSLR). The span at 171-184 (PPKKKSKHKHRHHH) shows a compositional bias: basic residues. Residues 193–210 (TRTDPTKKKKKKDNEPER) are compositionally biased toward basic and acidic residues. The span at 211-223 (RKKKKDKKKKKNR) shows a compositional bias: basic residues. The segment covering 232–242 (TGSQPNSNSLR) has biased composition (polar residues).

Belongs to the Mediator complex subunit 19 family. As to quaternary structure, component of the Mediator complex.

It localises to the nucleus. Functionally, component of the Mediator complex, a coactivator involved in the regulated transcription of nearly all RNA polymerase II-dependent genes. Mediator functions as a bridge to convey information from gene-specific regulatory proteins to the basal RNA polymerase II transcription machinery. Mediator is recruited to promoters by direct interactions with regulatory proteins and serves as a scaffold for the assembly of a functional preinitiation complex with RNA polymerase II and the general transcription factors. This is Mediator of RNA polymerase II transcription subunit 19-A (med19a) from Danio rerio (Zebrafish).